The sequence spans 318 residues: Pyrimidine-specific ribonucleoside hydrolase RihA (318 aa).

H240 is an active-site residue.

The protein belongs to the IUNH family. RihA subfamily.

Functionally, hydrolyzes cytidine or uridine to ribose and cytosine or uracil, respectively. The polypeptide is Pyrimidine-specific ribonucleoside hydrolase RihA (Shewanella baltica (strain OS185)).